Reading from the N-terminus, the 382-residue chain is Apolipoprotein A-IV (382 aa).

The signal sequence occupies residues 1–20 (MFLKAVVLTLSLVAVTGAQA). 13 consecutive repeat copies span residues 33–54 (DYFS…KSEL), 60–81 (ALFQ…KKLV), 82–103 (PFAT…EEIR), 115–136 (PHAD…QRLG), 137–158 (PYAE…NQLT), 159–180 (AHAQ…ASLT), 181–202 (PYAD…GHLT), 203–224 (PYAD…RSLA), 225–246 (PYAQ…FQMK), 247–268 (KNAE…QKLV), 269–286 (PVAE…EELQ), 287–308 (KSLA…RNVG), and 309–330 (PYGE…QKLG). The segment at 33–330 (DYFSQLSNNA…QVEELRQKLG (298 aa)) is 13 X 22 AA approximate tandem repeats.

Belongs to the apolipoprotein A1/A4/E family. Homodimer. In terms of processing, phosphorylation sites are present in the extracellular medium.

The protein resides in the secreted. Functionally, may have a role in chylomicrons and VLDL secretion and catabolism. Required for efficient activation of lipoprotein lipase by ApoC-II; potent activator of LCAT. Apoa-IV is a major component of HDL and chylomicrons. The chain is Apolipoprotein A-IV (APOA4) from Neomonachus schauinslandi (Hawaiian monk seal).